The sequence spans 569 residues: Urease subunit alpha (569 aa).

One can recognise a Urease domain in the interval 131 to 569; sequence GGMDAHIHYI…LPMAQRYFLF (439 aa). Positions 136, 138, and 218 each coordinate Ni(2+). Lys-218 is modified (N6-carboxylysine). Substrate is bound at residue His-220. His-247 and His-273 together coordinate Ni(2+). Residue His-321 is the Proton donor of the active site. Asp-361 is a binding site for Ni(2+).

It belongs to the metallo-dependent hydrolases superfamily. Urease alpha subunit family. In terms of assembly, heterotrimer of UreA (gamma), UreB (beta) and UreC (alpha) subunits. Three heterotrimers associate to form the active enzyme. It depends on Ni cation as a cofactor. Post-translationally, carboxylation allows a single lysine to coordinate two nickel ions.

It localises to the cytoplasm. The enzyme catalyses urea + 2 H2O + H(+) = hydrogencarbonate + 2 NH4(+). The protein operates within nitrogen metabolism; urea degradation; CO(2) and NH(3) from urea (urease route): step 1/1. The chain is Urease subunit alpha from Agrobacterium fabrum (strain C58 / ATCC 33970) (Agrobacterium tumefaciens (strain C58)).